Reading from the N-terminus, the 198-residue chain is Golgi to ER traffic protein 1 (198 aa).

Over 1-6 the chain is Lumenal; the sequence is MDPFSI. The helical transmembrane segment at 7–26 threads the bilayer; the sequence is LLTLTLIILAQNAVRIVGKS. The Cytoplasmic segment spans residues 27–110; sequence QIHQSIWNLY…AIEKYLGLAI (84 aa). The stretch at 73–106 forms a coiled coil; that stretch reads KWTKLNRKYDQLQTEIKAVSDQVSQQQQAIEKYL. The helical transmembrane segment at 111 to 131 threads the bilayer; the sequence is SVTTTLPLWLFRFKYRKQPLF. Residues 132–155 lie on the Lumenal side of the membrane; the sequence is YFPKDTFPSYLEWILSFPSVPQGS. The chain crosses the membrane as a helical span at residues 156-172; it reads IGIMFWILLLNKFVSNL. At 173–198 the chain is on the cytoplasmic side; it reads EFIVKTFSTKVEKPVPIVKVEDLSPK.

This sequence belongs to the WRB/GET1 family. In terms of assembly, component of the Golgi to ER traffic (GET) complex, which is composed of GET1, GET2 and GET3. Within the complex, GET1 and GET2 form a heterotetramer which is stabilized by phosphatidylinositol binding and which binds to the GET3 homodimer.

It is found in the endoplasmic reticulum membrane. It localises to the golgi apparatus membrane. Required for the post-translational delivery of tail-anchored (TA) proteins to the endoplasmic reticulum. Together with GET2, acts as a membrane receptor for soluble GET3, which recognizes and selectively binds the transmembrane domain of TA proteins in the cytosol. The GET complex cooperates with the HDEL receptor ERD2 to mediate the ATP-dependent retrieval of resident ER proteins that contain a C-terminal H-D-E-L retention signal from the Golgi to the ER. In Komagataella phaffii (strain GS115 / ATCC 20864) (Yeast), this protein is Golgi to ER traffic protein 1.